The following is a 475-amino-acid chain: Probable GABA permease (475 aa).

The next 12 membrane-spanning stretches (helical) occupy residues 27–47 (VTML…SGHA), 48–68 (IAAA…LVVL), 105–125 (LYWW…AAIL), 127–147 (AWFP…LLTV), 163–183 (FALL…VAIV), 211–231 (AVLG…IVTI), 250–270 (VIWR…SIVP), 296–316 (LIVD…AIYT), 345–365 (PAVL…YFAP), 368–388 (VFTF…LVIA), 413–433 (PWLT…MLIM), and 438–458 (HEVF…LLNA).

This sequence belongs to the amino acid-polyamine-organocation (APC) superfamily. Amino acid transporter (AAT) (TC 2.A.3.1) family.

It is found in the membrane. Its function is as follows. Involved in the degradation of beta-alanine. This chain is Probable GABA permease (bauD), found in Pseudomonas aeruginosa (strain ATCC 15692 / DSM 22644 / CIP 104116 / JCM 14847 / LMG 12228 / 1C / PRS 101 / PAO1).